The primary structure comprises 362 residues: 3-isopropylmalate dehydrogenase (362 aa).

An NAD(+)-binding site is contributed by 77–88 (GPKWGTGAVRPE). Substrate contacts are provided by R95, R105, R134, and D223. D223, D248, and D252 together coordinate Mg(2+). Residue 287-298 (GSAPDLPKGKVN) participates in NAD(+) binding.

The protein belongs to the isocitrate and isopropylmalate dehydrogenases family. As to quaternary structure, homodimer. Requires Mg(2+) as cofactor. Mn(2+) serves as cofactor.

Its subcellular location is the cytoplasm. It carries out the reaction (2R,3S)-3-isopropylmalate + NAD(+) = 4-methyl-2-oxopentanoate + CO2 + NADH. The protein operates within amino-acid biosynthesis; L-leucine biosynthesis; L-leucine from 3-methyl-2-oxobutanoate: step 3/4. Catalyzes the oxidation of 3-carboxy-2-hydroxy-4-methylpentanoate (3-isopropylmalate) to 3-carboxy-4-methyl-2-oxopentanoate. The product decarboxylates to 4-methyl-2 oxopentanoate. In Zygosaccharomyces bailii, this protein is 3-isopropylmalate dehydrogenase (LEU2).